Consider the following 240-residue polypeptide: UDP-2,3-diacylglucosamine hydrolase (240 aa).

Mn(2+)-binding residues include Asp9, His11, Asp43, Asn81, and His116. Substrate is bound at residue 81-82 (NR). Residues Asp124, Ser162, Lys166, Lys169, and His197 each coordinate substrate. Mn(2+) contacts are provided by His197 and His199.

It belongs to the LpxH family. Mn(2+) serves as cofactor.

It localises to the cell inner membrane. It carries out the reaction UDP-2-N,3-O-bis[(3R)-3-hydroxytetradecanoyl]-alpha-D-glucosamine + H2O = 2-N,3-O-bis[(3R)-3-hydroxytetradecanoyl]-alpha-D-glucosaminyl 1-phosphate + UMP + 2 H(+). The protein operates within glycolipid biosynthesis; lipid IV(A) biosynthesis; lipid IV(A) from (3R)-3-hydroxytetradecanoyl-[acyl-carrier-protein] and UDP-N-acetyl-alpha-D-glucosamine: step 4/6. Functionally, hydrolyzes the pyrophosphate bond of UDP-2,3-diacylglucosamine to yield 2,3-diacylglucosamine 1-phosphate (lipid X) and UMP by catalyzing the attack of water at the alpha-P atom. Involved in the biosynthesis of lipid A, a phosphorylated glycolipid that anchors the lipopolysaccharide to the outer membrane of the cell. The protein is UDP-2,3-diacylglucosamine hydrolase of Neisseria meningitidis serogroup C / serotype 2a (strain ATCC 700532 / DSM 15464 / FAM18).